The primary structure comprises 238 residues: Membrane protein 2 (238 aa).

It belongs to the varicellovirus ORF2 protein family. Post-translationally, phosphorylated by host.

Its subcellular location is the host membrane. The polypeptide is Membrane protein 2 (Varicella-zoster virus (strain Dumas) (HHV-3)).